Consider the following 147-residue polypeptide: Adenylylsulfatase HINT1 (147 aa).

One can recognise an HIT domain in the interval 37-147 (IFDKIISKEI…GGRQMNWPPG (111 aa)). The Histidine triad motif motif lies at 131–135 (HIHVH). Catalysis depends on histidine 133, which acts as the Tele-AMP-histidine intermediate. Histidine 135 lines the substrate pocket.

It localises to the peroxisome. Its subcellular location is the plastid. It is found in the chloroplast. It carries out the reaction adenosine 5'-phosphosulfate + H2O = sulfate + AMP + 2 H(+). Functionally, possesses adenylylsulfatase activity in vitro. This Arabidopsis thaliana (Mouse-ear cress) protein is Adenylylsulfatase HINT1.